We begin with the raw amino-acid sequence, 129 residues long: Ribonuclease P protein component (129 aa).

It belongs to the RnpA family. Consists of a catalytic RNA component (M1 or rnpB) and a protein subunit.

The catalysed reaction is Endonucleolytic cleavage of RNA, removing 5'-extranucleotides from tRNA precursor.. Functionally, RNaseP catalyzes the removal of the 5'-leader sequence from pre-tRNA to produce the mature 5'-terminus. It can also cleave other RNA substrates such as 4.5S RNA. The protein component plays an auxiliary but essential role in vivo by binding to the 5'-leader sequence and broadening the substrate specificity of the ribozyme. The protein is Ribonuclease P protein component of Prochlorococcus marinus (strain MIT 9515).